Reading from the N-terminus, the 340-residue chain is Cytochrome P450 monooxygenase cheG (340 aa).

The N-linked (GlcNAc...) asparagine glycan is linked to N25. The chain crosses the membrane as a helical span at residues 37 to 57; it reads MLLGIPTVILSLTPAVLRLLI. C283 contributes to the heme binding site. The segment at 308-340 is disordered; it reads LPPGQGKPEKGSMPNGSMSPDTKAKVLFRSRKL. Residue N322 is glycosylated (N-linked (GlcNAc...) asparagine).

Belongs to the cytochrome P450 family. It depends on heme as a cofactor.

It localises to the membrane. It participates in secondary metabolite biosynthesis. Cytochrome P450 monooxygenase; part of the gene cluster that mediates the biosynthesis of chaetoglobosin A which has a unique inhibitory activity against actin polymerization in mammalian cells. Chaetoglobosin A and its intermediates are involved in the morphological differentiation of C.globosum. The first step of the pathway is the synthesis of prochaetoglobosin I via condensation of one acetyl-CoA, 8 malonyl-CoA, and a L-tryptophan molecule by the PKS-NRPS hybrid synthetase cheA, followed by reduction of backbone double bond to install desired geometry by the enoyl reductase cheB. Further multiple oxidation steps performed by the cytochrome P450 monooxygenases cheE and cheG, as well as by the FAD-linked oxidoreductase cheF, lead to the formation of chaetoglobosin A. Depending on the order of action of these reductases, distinct intermediates can be identified. Within the pathway, the cytochrome P450 monooxygenase cheE catalyzes a stereospecific epoxidation on prochaetoglobosin I, cytoglobosin D, and chaetoglobosin J intermediates. The FAD-linked oxidoreductase cheF performs dehydrogenation of the C-20 hydroxyl groups in the 20-dihyrochaetoglobosin A and cytoglobosin D intermediates. Finally, the cytochrome P450 monooxygenase cheG can catalyze the stereospecific dihydroxylation of prochaetoglobosin I and prochaetoglobosin IV at C-19 and C-20, respectively. The Diels-Alderase cheD may play a role in the post-PKS-NRPS biosynthetic steps catalyzing Diels-Alder cyclization. The sequence is that of Cytochrome P450 monooxygenase cheG from Chaetomium globosum (strain ATCC 6205 / CBS 148.51 / DSM 1962 / NBRC 6347 / NRRL 1970) (Soil fungus).